Reading from the N-terminus, the 432-residue chain is uncharacterized protein (432 aa).

The protein to M.jannaschii MJ0977.

This is an uncharacterized protein from Methanocaldococcus jannaschii (strain ATCC 43067 / DSM 2661 / JAL-1 / JCM 10045 / NBRC 100440) (Methanococcus jannaschii).